A 324-amino-acid polypeptide reads, in one-letter code: 26S proteasome regulatory subunit rpn8 (324 aa).

The 135-residue stretch at 17 to 151 folds into the MPN domain; sequence VIVHPLVLLS…TNAYFAIDEI (135 aa).

This sequence belongs to the peptidase M67A family.

Acts as a regulatory subunit of the 26S proteasome which is involved in the ATP-dependent degradation of ubiquitinated proteins. In Schizosaccharomyces pombe (strain 972 / ATCC 24843) (Fission yeast), this protein is 26S proteasome regulatory subunit rpn8 (rpn8).